We begin with the raw amino-acid sequence, 191 residues long: Protein GrpE (191 aa).

Positions 1–10 (MNHEEQKVEA) are enriched in basic and acidic residues. The disordered stretch occupies residues 1 to 28 (MNHEEQKVEAMEQVEAQPVEPTDVDSEV).

The protein belongs to the GrpE family. In terms of assembly, homodimer.

The protein resides in the cytoplasm. Participates actively in the response to hyperosmotic and heat shock by preventing the aggregation of stress-denatured proteins, in association with DnaK and GrpE. It is the nucleotide exchange factor for DnaK and may function as a thermosensor. Unfolded proteins bind initially to DnaJ; upon interaction with the DnaJ-bound protein, DnaK hydrolyzes its bound ATP, resulting in the formation of a stable complex. GrpE releases ADP from DnaK; ATP binding to DnaK triggers the release of the substrate protein, thus completing the reaction cycle. Several rounds of ATP-dependent interactions between DnaJ, DnaK and GrpE are required for fully efficient folding. This Aeromonas hydrophila subsp. hydrophila (strain ATCC 7966 / DSM 30187 / BCRC 13018 / CCUG 14551 / JCM 1027 / KCTC 2358 / NCIMB 9240 / NCTC 8049) protein is Protein GrpE.